The following is a 356-amino-acid chain: Solute carrier family 25 member 3 (356 aa).

The transit peptide at Met1–Ala44 directs the protein to the mitochondrion. Residues Ala45–Lys57 lie on the Mitochondrial intermembrane side of the membrane. Solcar repeat units lie at residues Lys57–Leu141, Trp154–Ala238, and Glu255–Tyr333. Residues Tyr58–Leu80 traverse the membrane as a helical segment. Residues Asp81 to Lys115 lie on the Mitochondrial matrix side of the membrane. Position 93 is an N6-acetyllysine (Lys93). Lys106 is modified (N6-methyllysine). A helical membrane pass occupies residues Gly116 to Tyr135. Residues Glu136–Arg155 lie on the Mitochondrial intermembrane side of the membrane. Residues Thr156–Met177 form a helical membrane-spanning segment. Topologically, residues Glu178–Lys212 are mitochondrial matrix. The residue at position 190 (Tyr190) is a Phosphotyrosine. Position 203 is an N6-acetyllysine (Lys203). A helical transmembrane segment spans residues Gly213–Phe232. Over Glu233–Glu255 the chain is Mitochondrial intermembrane. A helical transmembrane segment spans residues Gln256–Ala278. Residues Asp279–Gly308 are Mitochondrial matrix-facing. A helical transmembrane segment spans residues Leu309–Tyr327. Topologically, residues Asp328 to Glu356 are mitochondrial intermembrane.

It belongs to the mitochondrial carrier (TC 2.A.29) family. Interacts with PPIF; the interaction is impaired by CsA.

It is found in the mitochondrion inner membrane. The enzyme catalyses phosphate(in) + H(+)(in) = phosphate(out) + H(+)(out). Inorganic ion transporter that transports phosphate or copper ions across the mitochondrial inner membrane into the matrix compartment. Mediates proton-coupled symport of phosphate ions necessary for mitochondrial oxidative phosphorylation of ADP to ATP. Transports copper ions probably in the form of anionic copper(I) complexes to maintain mitochondrial matrix copper pool and to supply copper for cytochrome C oxidase complex assembly. May also play a role in regulation of the mitochondrial permeability transition pore (mPTP). This is Solute carrier family 25 member 3 from Rattus norvegicus (Rat).